The chain runs to 145 residues: Large ribosomal subunit protein uL15 (145 aa).

Residues 1-30 (MAHSLRKTRKLRGHVSHGHGRIGKHRKHPG) show a composition bias toward basic residues. Residues 1 to 48 (MAHSLRKTRKLRGHVSHGHGRIGKHRKHPGGRGNAGGQHHHRINRDKY) are disordered.

Belongs to the universal ribosomal protein uL15 family. In terms of assembly, component of the large ribosomal subunit.

Its subcellular location is the cytoplasm. It localises to the cytosol. The protein resides in the rough endoplasmic reticulum. Functionally, component of the large ribosomal subunit. The protein is Large ribosomal subunit protein uL15 (rpl-27a) of Oscheius tipulae.